A 316-amino-acid chain; its full sequence is Retron Ec73 putative ribosyltransferase/DNA-binding protein (316 aa).

Its function is as follows. Possible ribosyltransferase/DNA-binding component of antiviral defense system retron Ec73, composed of a non-coding RNA (ncRNA) followed by this protein then a reverse transcriptase (RT). Expression of this retron confers protection against bacteriophages SECphi4, SECphi6, SECphi27 and P1. At multiplicity of infection (MOI) of 0.02 cultures grow normally when infected with SECphi4 without collapsing, at MOI 2 cultures enter growth stasis. The polypeptide is Retron Ec73 putative ribosyltransferase/DNA-binding protein (Escherichia coli).